We begin with the raw amino-acid sequence, 292 residues long: 3-methyl-2-oxobutanoate hydroxymethyltransferase 2 (292 aa).

Residues aspartate 52 and aspartate 91 each contribute to the Mg(2+) site. 3-methyl-2-oxobutanoate contacts are provided by residues 52 to 53, aspartate 91, and lysine 120; that span reads DS. Mg(2+) is bound at residue glutamate 122. Residue glutamate 189 is the Proton acceptor of the active site.

Belongs to the PanB family. Homodecamer; pentamer of dimers. Mg(2+) is required as a cofactor.

It localises to the cytoplasm. The catalysed reaction is 3-methyl-2-oxobutanoate + (6R)-5,10-methylene-5,6,7,8-tetrahydrofolate + H2O = 2-dehydropantoate + (6S)-5,6,7,8-tetrahydrofolate. It functions in the pathway cofactor biosynthesis; (R)-pantothenate biosynthesis; (R)-pantoate from 3-methyl-2-oxobutanoate: step 1/2. Its function is as follows. Catalyzes the reversible reaction in which hydroxymethyl group from 5,10-methylenetetrahydrofolate is transferred onto alpha-ketoisovalerate to form ketopantoate. The polypeptide is 3-methyl-2-oxobutanoate hydroxymethyltransferase 2 (Bradyrhizobium diazoefficiens (strain JCM 10833 / BCRC 13528 / IAM 13628 / NBRC 14792 / USDA 110)).